Consider the following 360-residue polypeptide: Photosystem II protein D1 (360 aa).

The next 3 membrane-spanning stretches (helical) occupy residues 29–46 (YIGW…SAIA), 118–133 (HFLI…EWEL), and 142–156 (WICV…AATA). Residue His-118 coordinates chlorophyll a. Tyr-126 is a pheophytin a binding site. [CaMn4O5] cluster contacts are provided by Asp-170 and Glu-189. Residues 197–218 (FHMLGVAGVFGGSLFSAMHGSL) form a helical membrane-spanning segment. Chlorophyll a is bound at residue His-198. A quinone is bound by residues His-215 and 264 to 265 (SF). Fe cation is bound at residue His-215. Position 272 (His-272) interacts with Fe cation. The helical transmembrane segment at 274-288 (FLAAWPVIGIWFTAL) threads the bilayer. Positions 332, 333, 342, and 344 each coordinate [CaMn4O5] cluster. Residues 345–360 (AGDVAPVALTAPPING) constitute a propeptide that is removed on maturation.

The protein belongs to the reaction center PufL/M/PsbA/D family. As to quaternary structure, PSII is composed of 1 copy each of membrane proteins PsbA, PsbB, PsbC, PsbD, PsbE, PsbF, PsbH, PsbI, PsbJ, PsbK, PsbL, PsbM, PsbT, PsbX, PsbY, PsbZ, Psb30/Ycf12, peripheral proteins PsbO, CyanoQ (PsbQ), PsbU, PsbV and a large number of cofactors. It forms dimeric complexes. The cofactor is The D1/D2 heterodimer binds P680, chlorophylls that are the primary electron donor of PSII, and subsequent electron acceptors. It shares a non-heme iron and each subunit binds pheophytin, quinone, additional chlorophylls, carotenoids and lipids. D1 provides most of the ligands for the Mn4-Ca-O5 cluster of the oxygen-evolving complex (OEC). There is also a Cl(-1) ion associated with D1 and D2, which is required for oxygen evolution. The PSII complex binds additional chlorophylls, carotenoids and specific lipids.. Post-translationally, tyr-161 forms a radical intermediate that is referred to as redox-active TyrZ, YZ or Y-Z. C-terminally processed by CtpA; processing is essential to allow assembly of the oxygen-evolving complex and thus photosynthetic growth.

Its subcellular location is the cellular thylakoid membrane. It carries out the reaction 2 a plastoquinone + 4 hnu + 2 H2O = 2 a plastoquinol + O2. In terms of biological role, photosystem II (PSII) is a light-driven water:plastoquinone oxidoreductase that uses light energy to abstract electrons from H(2)O, generating O(2) and a proton gradient subsequently used for ATP formation. It consists of a core antenna complex that captures photons, and an electron transfer chain that converts photonic excitation into a charge separation. The D1/D2 (PsbA/PsbD) reaction center heterodimer binds P680, the primary electron donor of PSII as well as several subsequent electron acceptors. The sequence is that of Photosystem II protein D1 from Trichormus azollae (Anabaena azollae).